A 295-amino-acid polypeptide reads, in one-letter code: Bifunctional protein FolD (295 aa).

NADP(+)-binding positions include G166–S168, S195, and I236.

Belongs to the tetrahydrofolate dehydrogenase/cyclohydrolase family. In terms of assembly, homodimer.

It catalyses the reaction (6R)-5,10-methylene-5,6,7,8-tetrahydrofolate + NADP(+) = (6R)-5,10-methenyltetrahydrofolate + NADPH. The enzyme catalyses (6R)-5,10-methenyltetrahydrofolate + H2O = (6R)-10-formyltetrahydrofolate + H(+). The protein operates within one-carbon metabolism; tetrahydrofolate interconversion. Its function is as follows. Catalyzes the oxidation of 5,10-methylenetetrahydrofolate to 5,10-methenyltetrahydrofolate and then the hydrolysis of 5,10-methenyltetrahydrofolate to 10-formyltetrahydrofolate. The protein is Bifunctional protein FolD of Chlorobium phaeovibrioides (strain DSM 265 / 1930) (Prosthecochloris vibrioformis (strain DSM 265)).